Consider the following 237-residue polypeptide: Lectin alpha chain (237 aa).

Residues Glu-8 and Asp-10 each contribute to the Mn(2+) site. Asp-10, Tyr-12, Asn-14, and Asp-19 together coordinate Ca(2+). Tyr-12 contacts a carbohydrate. Asp-19, His-24, and Ser-34 together coordinate Mn(2+). 99-100 (LY) lines the a carbohydrate pocket. Asp-208 is a Ca(2+) binding site. Position 228 (Arg-228) interacts with a carbohydrate.

It belongs to the leguminous lectin family. In terms of assembly, equilibrium between homodimer and homotetramer. Oligomerization is pH-dependent with homotetramers forming at pH 6.5 and above. In terms of processing, the beta and gamma chains are produced by partial proteolytic processing of the lectin alpha chain by an asparaginyl endopeptidase. Mixture of 60% alpha lectin and 40% of its beta and gamma proteolytic fragments. As to expression, seed.

It localises to the vacuole. The protein resides in the aleurone grain. D-mannose/D-glucose-binding lectin. Induces histamine release in mast cells from hamster and rat. Induces lymphocyte proliferation and IFNG production. The protein is Lectin alpha chain of Macropsychanthus bicolor (Dioclea rostrata).